The primary structure comprises 707 residues: Elongation factor G (707 aa).

The 287-residue stretch at 8 to 294 folds into the tr-type G domain; sequence ERYRNFGIIA…GVVDYLPSPL (287 aa). GTP contacts are provided by residues 17–24, 92–96, and 146–149; these read AHIDAGKT, DTPGH, and NKMD.

This sequence belongs to the TRAFAC class translation factor GTPase superfamily. Classic translation factor GTPase family. EF-G/EF-2 subfamily.

Its subcellular location is the cytoplasm. Functionally, catalyzes the GTP-dependent ribosomal translocation step during translation elongation. During this step, the ribosome changes from the pre-translocational (PRE) to the post-translocational (POST) state as the newly formed A-site-bound peptidyl-tRNA and P-site-bound deacylated tRNA move to the P and E sites, respectively. Catalyzes the coordinated movement of the two tRNA molecules, the mRNA and conformational changes in the ribosome. The polypeptide is Elongation factor G (Hyphomonas neptunium (strain ATCC 15444)).